The following is a 320-amino-acid chain: tRNA uridine(34) hydroxylase (320 aa).

In terms of domain architecture, Rhodanese spans 123–217 (EDEDTVILDA…YGKDPETKGQ (95 aa)). The active-site Cysteine persulfide intermediate is cysteine 177.

The protein belongs to the TrhO family.

It carries out the reaction uridine(34) in tRNA + AH2 + O2 = 5-hydroxyuridine(34) in tRNA + A + H2O. Its function is as follows. Catalyzes oxygen-dependent 5-hydroxyuridine (ho5U) modification at position 34 in tRNAs. The polypeptide is tRNA uridine(34) hydroxylase (Staphylococcus haemolyticus (strain JCSC1435)).